A 385-amino-acid chain; its full sequence is 1-deoxy-D-xylulose 5-phosphate reductoisomerase (385 aa).

Positions 10, 11, 12, 13, 38, and 124 each coordinate NADPH. Residue K125 participates in 1-deoxy-D-xylulose 5-phosphate binding. An NADPH-binding site is contributed by E126. D150 contributes to the Mn(2+) binding site. 4 residues coordinate 1-deoxy-D-xylulose 5-phosphate: S151, E152, S176, and H199. E152 is a binding site for Mn(2+). Position 205 (G205) interacts with NADPH. 1-deoxy-D-xylulose 5-phosphate is bound by residues S212, N217, K218, and E221. Residue E221 coordinates Mn(2+).

Belongs to the DXR family. Requires Mg(2+) as cofactor. Mn(2+) serves as cofactor.

The enzyme catalyses 2-C-methyl-D-erythritol 4-phosphate + NADP(+) = 1-deoxy-D-xylulose 5-phosphate + NADPH + H(+). The protein operates within isoprenoid biosynthesis; isopentenyl diphosphate biosynthesis via DXP pathway; isopentenyl diphosphate from 1-deoxy-D-xylulose 5-phosphate: step 1/6. In terms of biological role, catalyzes the NADPH-dependent rearrangement and reduction of 1-deoxy-D-xylulose-5-phosphate (DXP) to 2-C-methyl-D-erythritol 4-phosphate (MEP). The chain is 1-deoxy-D-xylulose 5-phosphate reductoisomerase from Clostridium acetobutylicum (strain ATCC 824 / DSM 792 / JCM 1419 / IAM 19013 / LMG 5710 / NBRC 13948 / NRRL B-527 / VKM B-1787 / 2291 / W).